The sequence spans 53 residues: MAVQQNKKSRSRRDMRRSHDALTTAAVSVDARGETHLRHHVTADGYYRGRKIK.

Residues 1–27 form a disordered region; the sequence is MAVQQNKKSRSRRDMRRSHDALTTAAV. Residues 7–16 are compositionally biased toward basic residues; sequence KKSRSRRDMR.

It belongs to the bacterial ribosomal protein bL32 family.

The chain is Large ribosomal subunit protein bL32 from Glaesserella parasuis serovar 5 (strain SH0165) (Haemophilus parasuis).